A 154-amino-acid chain; its full sequence is Jupiter microtubule associated homolog 1 (154 aa).

An N-acetylmethionine modification is found at Met-1. Residues 1–19 (MTTTTTFKGVDPNSRNSSR) show a composition bias toward polar residues. Positions 1–154 (MTTTTTFKGV…PGGKSSLVLG (154 aa)) are disordered. Thr-2 bears the N-acetylthreonine; in Hematological and neurological expressed 1 protein, N-terminally processed mark. 2 positions are modified to phosphoserine: Ser-28 and Ser-31. Polar residues predominate over residues 47 to 59 (MASNIFGTPEENQ). Position 54 is a phosphothreonine (Thr-54). Residues 60–71 (ASWAKSAGAKSS) show a composition bias toward low complexity. 5 positions are modified to phosphoserine: Ser-71, Ser-80, Ser-87, Ser-88, and Ser-92. The segment covering 80–91 (SGLQRRNSSEAS) has biased composition (polar residues). Basic and acidic residues predominate over residues 96–108 (LDLKGEGDIHENV). Residues 125-138 (PAAPVPSPVAPAPV) are compositionally biased toward pro residues. Ser-131 is subject to Phosphoserine. Residue Lys-148 is modified to N6-acetyllysine.

It belongs to the JUPITER family. In terms of assembly, interacts with the complex composed, at least, of APC, CTNNB1 and GSK3B; the interaction takes place with the inactive form of GSK3B (phosphorylated at 'Ser-9'). As to expression, expressed in testis, skeletal muscle, thymus, prostate, colon, peripheral blood cells, brain and placenta.

The protein resides in the nucleus. It is found in the cytoplasm. Modulates negatively AKT-mediated GSK3B signaling. Induces CTNNB1 'Ser-33' phosphorylation and degradation through the suppression of the inhibitory 'Ser-9' phosphorylation of GSK3B, which represses the function of the APC:CTNNB1:GSK3B complex and the interaction with CDH1/E-cadherin in adherent junctions. Plays a role in the regulation of cell cycle and cell adhesion. Has an inhibitory role on AR-signaling pathway through the induction of receptor proteasomal degradation. This is Jupiter microtubule associated homolog 1 from Homo sapiens (Human).